The sequence spans 543 residues: MFSLQELCRKNIYILPYPLGKHVLQQLGLYWKGHGSLQRIGDDHVLLQQDLIFSINEALRMAGEEGNNEVVKLLLLWEGNLHYAIIGALEGDRYDLIHKYYDQIGDCHKILPLIQDPQIFEKCHELSNSCNIRCLLEHAVKHDMLSILQKHKEQIRLHLALTQILFELACHERKNDIIRWIGYSLHIHHLETIFDVAFAHKNLSLYVLGYELLMHKVNTEAAYIELPNLLSYHLRTAAAGGLLNFMLETIKHGGYVDKTVLSAAIRYKHRKIVAHFIHQVPRKTVKKLLLYAVQARAPKKTLNLLLSSLNYSVHTITKQLVHNVVIYSSTLIVKLLLMRRKNKLNLVDAVLARLVKYSTYTDIVQFMSEFSVSPERVIKMAARESRTFLIEMISKAAWGNHPQTLIHHLKQLAHTMKSQSGKDLIIYTIHYIYLNSNMLVAEEEKNIFKLAKFYANHNAVNRFKQVCEDYYALDVDARFKTLILECFEIAVQKNYPRIANIVDDYVRFLFYRGDITEEEIHEAYSLKDAEFYVDLKWLQHDLF.

This sequence belongs to the asfivirus MGF 505 family.

Plays a role in virus cell tropism, and may be required for efficient virus replication in macrophages. This is Protein MGF 505-10R from African swine fever virus (isolate Tick/South Africa/Pretoriuskop Pr4/1996) (ASFV).